A 103-amino-acid chain; its full sequence is Large ribosomal subunit protein bL21 (103 aa).

Belongs to the bacterial ribosomal protein bL21 family. As to quaternary structure, part of the 50S ribosomal subunit. Contacts protein L20.

In terms of biological role, this protein binds to 23S rRNA in the presence of protein L20. The sequence is that of Large ribosomal subunit protein bL21 from Mycobacteroides abscessus (strain ATCC 19977 / DSM 44196 / CCUG 20993 / CIP 104536 / JCM 13569 / NCTC 13031 / TMC 1543 / L948) (Mycobacterium abscessus).